The sequence spans 247 residues: Aliphatic sulfonates import ATP-binding protein SsuB 1 (247 aa).

The region spanning 7 to 222 (LSLSGVHKSF…KRSSYEFVET (216 aa)) is the ABC transporter domain. Residue 39–46 (GKSGCGKS) coordinates ATP.

The protein belongs to the ABC transporter superfamily. Aliphatic sulfonates importer (TC 3.A.1.17.2) family. As to quaternary structure, the complex is composed of two ATP-binding proteins (SsuB), two transmembrane proteins (SsuC) and a solute-binding protein (SsuA).

It localises to the cell membrane. The catalysed reaction is ATP + H2O + aliphatic sulfonate-[sulfonate-binding protein]Side 1 = ADP + phosphate + aliphatic sulfonateSide 2 + [sulfonate-binding protein]Side 1.. Its function is as follows. Part of the ABC transporter complex SsuABC involved in aliphatic sulfonates import. Responsible for energy coupling to the transport system. The protein is Aliphatic sulfonates import ATP-binding protein SsuB 1 of Shouchella clausii (strain KSM-K16) (Alkalihalobacillus clausii).